A 115-amino-acid chain; its full sequence is MTKTKPAPHRVKMHVKKGDTIQVISGKDKGKVGEVLRTIPSHSQVVVKGVNIRTKHVKPRQEGESGQISSYEAPIHSSKVMLYSTKEKIASRICYTVTDDGRKVRMLKKTGEIID.

The protein belongs to the universal ribosomal protein uL24 family. Part of the 50S ribosomal subunit.

Its function is as follows. One of two assembly initiator proteins, it binds directly to the 5'-end of the 23S rRNA, where it nucleates assembly of the 50S subunit. Functionally, one of the proteins that surrounds the polypeptide exit tunnel on the outside of the subunit. This is Large ribosomal subunit protein uL24 from Synechocystis sp. (strain ATCC 27184 / PCC 6803 / Kazusa).